The following is a 258-amino-acid chain: Ribonuclease HII (258 aa).

One can recognise an RNase H type-2 domain in the interval 71–258 (QLIAGIDEVG…PIKTMVNFKS (188 aa)). Residues Asp-77, Glu-78, and Asp-169 each coordinate a divalent metal cation.

This sequence belongs to the RNase HII family. Mn(2+) serves as cofactor. Requires Mg(2+) as cofactor.

It is found in the cytoplasm. The enzyme catalyses Endonucleolytic cleavage to 5'-phosphomonoester.. Its function is as follows. Endonuclease that specifically degrades the RNA of RNA-DNA hybrids. This Lactococcus lactis subsp. lactis (strain IL1403) (Streptococcus lactis) protein is Ribonuclease HII (rnhB).